Here is a 254-residue protein sequence, read N- to C-terminus: Type III pantothenate kinase (254 aa).

6-13 serves as a coordination point for ATP; it reads DVGNTNIV. Residue 107-110 participates in substrate binding; sequence GADR. Asp109 acts as the Proton acceptor in catalysis. Asp129 serves as a coordination point for K(+). ATP is bound at residue Thr132. Residue Thr184 participates in substrate binding.

Belongs to the type III pantothenate kinase family. In terms of assembly, homodimer. NH4(+) serves as cofactor. The cofactor is K(+).

Its subcellular location is the cytoplasm. The catalysed reaction is (R)-pantothenate + ATP = (R)-4'-phosphopantothenate + ADP + H(+). It functions in the pathway cofactor biosynthesis; coenzyme A biosynthesis; CoA from (R)-pantothenate: step 1/5. Catalyzes the phosphorylation of pantothenate (Pan), the first step in CoA biosynthesis. This chain is Type III pantothenate kinase, found in Exiguobacterium sp. (strain ATCC BAA-1283 / AT1b).